Here is a 471-residue protein sequence, read N- to C-terminus: Coagulation factor IX (471 aa).

The signal sequence occupies residues 1 to 19 (MAKIPLILSFCLLEAFLGA). Positions 20–39 (ESTVFIENKEASTVLSRTRR) are excised as a propeptide. In terms of domain architecture, Gla spans 40–85 (GNSNRLEELIPGNLERECIEEKCSFEEAREVFENTEKTMEFWKIYI). Positions 41, 46, 47, 54, 56, 59, 60, 65, 66, and 69 each coordinate Ca(2+). A 4-carboxyglutamate mark is found at glutamate 46, glutamate 47, glutamate 54, glutamate 56, glutamate 59, glutamate 60, glutamate 65, glutamate 66, glutamate 69, glutamate 72, glutamate 75, and glutamate 79. Glutamate 54 contacts Mg(2+). A disulfide bridge links cysteine 57 with cysteine 62. Glutamate 59 contributes to the Mg(2+) binding site. Glutamate 65 contacts Mg(2+). Position 69 (glutamate 69) interacts with Mg(2+). 5 residues coordinate Ca(2+): glutamate 75, glutamate 79, aspartate 86, glycine 87, and glutamine 89. Residues glutamate 75 and glutamate 79 each coordinate Mg(2+). One can recognise an EGF-like 1; calcium-binding domain in the interval 86-122 (DGDQCNSNPCKNGAVCKDGVSSYECMCPPGYGGRNCE). Cystine bridges form between cysteine 90/cysteine 101, cysteine 95/cysteine 110, cysteine 112/cysteine 121, cysteine 127/cysteine 138, cysteine 134/cysteine 148, cysteine 150/cysteine 163, cysteine 171/cysteine 345, cysteine 262/cysteine 278, cysteine 392/cysteine 406, and cysteine 417/cysteine 445. Serine 92 carries O-linked (Glc...) serine glycosylation. Ca(2+) is bound at residue aspartate 103. Position 103 is a (3R)-3-hydroxyaspartate (aspartate 103). Position 107 is a phosphoserine (serine 107). The EGF-like 2 domain occupies 123–164 (IDSTCATKNGGCEHFCRHDTPQKAVCSCASGYKLHEDGKSCK). Residues 186–235 (TENTIERWNITAHDEGDAHDEALDITEPPPPPTTSAAPAKIVPITKNDTR) constitute a propeptide, activation peptide. Residues 236–469 (VVGGYDSVKG…YVKWIRETTR (234 aa)) enclose the Peptidase S1 domain. Catalysis depends on histidine 277, which acts as the Charge relay system. Residues glutamate 291, asparagine 293, glutamate 296, and glutamate 301 each contribute to the Ca(2+) site. Aspartate 325 (charge relay system) is an active-site residue. The active-site Charge relay system is the serine 421.

The protein belongs to the peptidase S1 family. Heterodimer of a light chain and a heavy chain; disulfide-linked. Activated by factor XIa, which excises the activation peptide. The propeptide can also be removed by snake venom protease. Activated by coagulation factor VIIa-tissue factor (F7-F3) complex in calcium-dependent manner. Post-translationally, the iron and 2-oxoglutarate dependent 3-hydroxylation of aspartate and asparagine is (R) stereospecific within EGF domains.

The protein resides in the secreted. It carries out the reaction Selective cleavage of Arg-|-Ile bond in factor X to form factor Xa.. Its function is as follows. Factor IX is a vitamin K-dependent plasma protein that participates in the intrinsic pathway of blood coagulation by converting factor X to its active form in the presence of Ca(2+) ions, phospholipids, and factor VIIIa. The chain is Coagulation factor IX (F9) from Gallus gallus (Chicken).